The chain runs to 357 residues: Trans-resveratrol di-O-methyltransferase (357 aa).

Positions 200, 223, 243, 244, and 257 each coordinate S-adenosyl-L-methionine. Catalysis depends on histidine 261, which acts as the Proton acceptor.

Belongs to the class I-like SAM-binding methyltransferase superfamily. Cation-independent O-methyltransferase family. COMT subfamily.

It catalyses the reaction trans-resveratrol + 2 S-adenosyl-L-methionine = pterostilbene + 2 S-adenosyl-L-homocysteine + 2 H(+). Its function is as follows. Catalyzes the biosynthesis of pterostilbene from resveratrol. Pterostilbene has both antifungal and pharmacological properties. Also has activity toward resveratrol monomethyl ether (RME). This Vitis vinifera (Grape) protein is Trans-resveratrol di-O-methyltransferase (ROMT).